A 281-amino-acid polypeptide reads, in one-letter code: Pantothenate synthetase (281 aa).

An ATP-binding site is contributed by 30–37 (MGYLHDGH). The active-site Proton donor is histidine 37. Glutamine 61 serves as a coordination point for (R)-pantoate. A beta-alanine-binding site is contributed by glutamine 61. An ATP-binding site is contributed by 147–150 (GEKD). Glutamine 153 lines the (R)-pantoate pocket. Residues isoleucine 176 and 184 to 187 (KSSR) contribute to the ATP site.

Belongs to the pantothenate synthetase family. In terms of assembly, homodimer.

It localises to the cytoplasm. It carries out the reaction (R)-pantoate + beta-alanine + ATP = (R)-pantothenate + AMP + diphosphate + H(+). The protein operates within cofactor biosynthesis; (R)-pantothenate biosynthesis; (R)-pantothenate from (R)-pantoate and beta-alanine: step 1/1. Functionally, catalyzes the condensation of pantoate with beta-alanine in an ATP-dependent reaction via a pantoyl-adenylate intermediate. In Clostridium acetobutylicum (strain ATCC 824 / DSM 792 / JCM 1419 / IAM 19013 / LMG 5710 / NBRC 13948 / NRRL B-527 / VKM B-1787 / 2291 / W), this protein is Pantothenate synthetase.